A 274-amino-acid polypeptide reads, in one-letter code: Bis(5'-nucleosyl)-tetraphosphatase, symmetrical (274 aa).

It belongs to the Ap4A hydrolase family.

The enzyme catalyses P(1),P(4)-bis(5'-adenosyl) tetraphosphate + H2O = 2 ADP + 2 H(+). In terms of biological role, hydrolyzes diadenosine 5',5'''-P1,P4-tetraphosphate to yield ADP. The protein is Bis(5'-nucleosyl)-tetraphosphatase, symmetrical of Shewanella sp. (strain MR-7).